The following is a 179-amino-acid chain: Nucleoside-triphosphatase THEP1 (179 aa).

ATP-binding positions include 7–14 (GRPGVGKT) and 94–101 (LIIVDEIG).

This sequence belongs to the THEP1 NTPase family.

It catalyses the reaction a ribonucleoside 5'-triphosphate + H2O = a ribonucleoside 5'-diphosphate + phosphate + H(+). In terms of biological role, has nucleotide phosphatase activity towards ATP, GTP, CTP, TTP and UTP. May hydrolyze nucleoside diphosphates with lower efficiency. The polypeptide is Nucleoside-triphosphatase THEP1 (Thermotoga petrophila (strain ATCC BAA-488 / DSM 13995 / JCM 10881 / RKU-1)).